The following is a 309-amino-acid chain: Olfactory receptor 5AC2 (309 aa).

The Extracellular portion of the chain corresponds to 1 to 27 (MDISEGNKTLVTEFVLTGLTDRPWLHV). The N-linked (GlcNAc...) asparagine glycan is linked to N7. Residues 28 to 48 (LFFVVFLVVYLITMVGNLGLI) form a helical membrane-spanning segment. Residues 49–56 (VLIWNDPH) lie on the Cytoplasmic side of the membrane. The chain crosses the membrane as a helical span at residues 57 to 77 (LHMPMYLFLGGLAFSDACTST). The Extracellular portion of the chain corresponds to 78 to 101 (SITPRMLVNFLDKTAMISLAECIT). A disulfide bridge links C99 with C191. The helical transmembrane segment at 102-122 (QFYFFASSATTECFLLVMMAY) threads the bilayer. Over 123–135 (DRYVAICNPLLYP) the chain is Cytoplasmic. Residues 136 to 156 (VMMSNKLSAQLLSISYVIGFL) traverse the membrane as a helical segment. Over 157–198 (HPLVHVSLLLRLTFCRFNIIHYFYCEILQLFKISCNGPSINA) the chain is Extracellular. Residues 199–219 (LMIFIFGAFIQIPTLMTIIIS) form a helical membrane-spanning segment. The Cytoplasmic portion of the chain corresponds to 220-239 (YTRVLFDILKKKSEKGRSKA). Residues 240 to 260 (FSTCGAHLLSVSLYYGTLIFM) traverse the membrane as a helical segment. Topologically, residues 261–273 (YVRPASGLAEDQD) are extracellular. The chain crosses the membrane as a helical span at residues 274–294 (KVYSLFYTIIIPLLNPFIYSL). At 295 to 309 (RNKKVMHALRRVIRK) the chain is on the cytoplasmic side.

The protein belongs to the G-protein coupled receptor 1 family.

The protein localises to the cell membrane. Odorant receptor. The protein is Olfactory receptor 5AC2 (OR5AC2) of Homo sapiens (Human).